The following is a 108-amino-acid chain: Transcription factor S (108 aa).

Zn(2+) contacts are provided by Cys-5, Cys-8, Cys-21, Cys-24, Cys-69, Cys-72, Cys-97, and Cys-100. The C4-type zinc-finger motif lies at 5–24; the sequence is CPKCNNLMLPKDGKLKCAVC. The segment at 65-105 adopts a TFIIS-type zinc-finger fold; it reads TRIECPKCGHNEAYWWLQQTRCADEPETRFYKCKKCGHTWR.

Belongs to the archaeal RpoM/eukaryotic RPA12/RPB9/RPC11 RNA polymerase family.

Induces RNA cleavage activity in the RNA polymerase. In its presence, the cleavage activity of the RNA polymerase truncates the RNA back to position +15 in a stepwise manner by releasing mainly dinucleotides from the 3'-end of the nascent RNA. The truncated RNAs are able to continue elongation. Involved in transcriptional proofreading and fidelity. Misincorporation of nucleotides during elongation of transcription leads to arrested elongation complexes which are rescued by TFS-promoted removal of a dinucleotide from the 3'-end. TFS is able to induce a cleavage resynthesis cycle in stalled elongation complexes (resulting from the next missing nucleotide or a reduced incorporation rate of a wrong nucleotide) preventing misincorporation and enabling proofreading in a post-incorporation manner. Pausing of elongation complexes is the main determinant of TFS-induced RNA cleavage. The polypeptide is Transcription factor S (Methanocaldococcus jannaschii (strain ATCC 43067 / DSM 2661 / JAL-1 / JCM 10045 / NBRC 100440) (Methanococcus jannaschii)).